Reading from the N-terminus, the 159-residue chain is Prs ADP-ribosylating antitoxin (159 aa).

Residues 99 to 159 (EDMVEESGET…LAQIQSGAFA (61 aa)) are sufficient to neutralize toxin.

Belongs to the MbcA/ParS/Xre antitoxin family. Forms heterotetrameric ParS(2)-ParT(2) complexes. The 2 antitoxin fragments do not make contact in the crystal structure.

Antitoxin component of a type II toxin-antitoxin (TA) system. Neutralizes the bacteriostatic effect of cognate toxin ParT by inserting into its active site. This Sphingobium sp. (strain YBL2) protein is Prs ADP-ribosylating antitoxin.